Here is a 356-residue protein sequence, read N- to C-terminus: Heat-inducible transcription repressor HrcA (356 aa).

Belongs to the HrcA family.

Negative regulator of class I heat shock genes (grpE-dnaK-dnaJ and groELS operons). Prevents heat-shock induction of these operons. The chain is Heat-inducible transcription repressor HrcA from Chlorobaculum parvum (strain DSM 263 / NCIMB 8327) (Chlorobium vibrioforme subsp. thiosulfatophilum).